Reading from the N-terminus, the 519-residue chain is Laccase-2 (519 aa).

The signal sequence occupies residues 1-20 (MGLQRFSFFVTLALVARSLA). Plastocyanin-like domains are found at residues 22–147 (IGPV…FVVY) and 159–301 (VDNE…ILRY). The N-linked (GlcNAc...) asparagine glycan is linked to Asn-74. 4 residues coordinate Cu cation: His-84, His-86, His-129, and His-131. 2 cysteine pairs are disulfide-bonded: Cys-105–Cys-508 and Cys-137–Cys-225. Asn-161, Asn-228, Asn-237, Asn-271, Asn-353, and Asn-361 each carry an N-linked (GlcNAc...) asparagine glycan. Residues 368 to 490 (TVPVLLQILS…AGFAIVFAED (123 aa)) enclose the Plastocyanin-like 3 domain. Cu cation-binding residues include His-415, His-418, His-420, His-472, Cys-473, His-474, and His-478.

The protein belongs to the multicopper oxidase family. As to quaternary structure, homodimer. Cu cation serves as cofactor.

Its subcellular location is the secreted. The enzyme catalyses 4 hydroquinone + O2 = 4 benzosemiquinone + 2 H2O. Functionally, lignin degradation and detoxification of lignin-derived products. This is Laccase-2 from Trametes villosa (White-rot fungus).